The following is a 1470-amino-acid chain: Niemann-Pick type C1-related protein (1470 aa).

Residues 1–3 lie on the Cytoplasmic side of the membrane; that stretch reads MFV. The stretch at 4–34 is an intramembrane region; the sequence is KNFIHKLKELKQKSLDKFANLLYDYGGYVYD. A topological domain (cytoplasmic) is located at residue R35. Residues 36-56 form a helical membrane-spanning segment; sequence PCTFIICSLICCLLLTCGFYF. The Extracellular portion of the chain corresponds to 57 to 493; the sequence is KEHEKDIYKL…DEVDRISKID (437 aa). N-linked (GlcNAc...) asparagine glycosylation is found at N78, N165, N294, and N361. Residues 494-514 traverse the membrane as a helical segment; sequence NLTRLLLLIGVLLIFMYALFN. In terms of domain architecture, SSD spans 494–653; that stretch reads NLTRLLLLIG…LTFLLSFLCI (160 aa). Topologically, residues 515–524 are cytoplasmic; the sequence is NVTSVLYRSK. The chain crosses the membrane as a helical span at residues 525–549; sequence PLCAVMGIFCGFLGFLSGSGFLYFL. Topologically, residues 550–554 are extracellular; that stretch reads GVKSV. The chain crosses the membrane as a helical span at residues 555–582; it reads PPAETVPFLVIGVGVDDVFVILNSYSLL. Topologically, residues 583–587 are cytoplasmic; that stretch reads FMVKD. The helical transmembrane segment at 588 to 619 threads the bilayer; the sequence is NKKRIQMCLKDSALAITVTTLTNIIAFLISAI. Topologically, residues 620 to 622 are extracellular; it reads SPF. Residues 623-659 form a helical membrane-spanning segment; that stretch reads YSICAFSLFTASSLFFGYLMVLTFLLSFLCIEAKLEK. At 660–663 the chain is on the cytoplasmic side; sequence KKRN. Residues 664–673 lie within the membrane without spanning it; it reads IFTGTFHLFR. Residues 674-1057 lie on the Cytoplasmic side of the membrane; that stretch reads SIFMKSSKKN…IYEEPKGNIG (384 aa). Residues 1058–1073 lie within the membrane without spanning it; it reads KYFRSLVKNYYVPFLS. Position 1074 (S1074) is a topological domain, cytoplasmic. The helical transmembrane segment at 1075–1098 threads the bilayer; the sequence is RFGKTIVYIMFTIIIAMSIYGCTL. The Extracellular portion of the chain corresponds to 1099–1300; sequence MKKGIKYDKA…NHNVQMVCFH (202 aa). An N-linked (GlcNAc...) asparagine glycan is attached at N1218. The helical transmembrane segment at 1301-1334 threads the bilayer; it reads LSSIFNETDESIIEVTLINLGITILTILVVTAYI. Topologically, residues 1335-1337 are cytoplasmic; it reads IKG. The chain crosses the membrane as a helical span at residues 1338-1361; that stretch reads FYSCVIIALIIFLIDLCIFGFMCL. The Extracellular portion of the chain corresponds to 1362 to 1367; sequence CGITMN. The chain crosses the membrane as a helical span at residues 1368-1394; that stretch reads IISMVILVLSVGFSIDHTSHIVQAFSH. The Cytoplasmic portion of the chain corresponds to 1395-1399; it reads SMGRT. Residues 1400–1431 traverse the membrane as a helical segment; that stretch reads RDEKMKESLHLMIGPVLHSGLSTWFVISTLFF. The Extracellular portion of the chain corresponds to 1432–1434; that stretch reads SNK. The helical transmembrane segment at 1435-1466 threads the bilayer; sequence DFTVIFFQTLSLVLFFSITFSSMFLPVLLSSF. The Cytoplasmic segment spans residues 1467 to 1470; it reads GPLH.

Belongs to the patched family.

It is found in the cell membrane. The catalysed reaction is cholesterol(in) = cholesterol(out). Functionally, facilitates cholesterol efflux from membranes in a pH-dependent manner. Required for maintaining normal parasite plasma membrane lipid composition. Required for the proper functioning of digestive vacuole. Required for the viability of blood-stage parasites. This chain is Niemann-Pick type C1-related protein, found in Plasmodium falciparum (isolate 3D7).